We begin with the raw amino-acid sequence, 871 residues long: Alanine--tRNA ligase (871 aa).

Zn(2+)-binding residues include H561, H565, C665, and H669.

Belongs to the class-II aminoacyl-tRNA synthetase family. The cofactor is Zn(2+).

Its subcellular location is the cytoplasm. It carries out the reaction tRNA(Ala) + L-alanine + ATP = L-alanyl-tRNA(Ala) + AMP + diphosphate. Catalyzes the attachment of alanine to tRNA(Ala) in a two-step reaction: alanine is first activated by ATP to form Ala-AMP and then transferred to the acceptor end of tRNA(Ala). Also edits incorrectly charged Ser-tRNA(Ala) and Gly-tRNA(Ala) via its editing domain. The polypeptide is Alanine--tRNA ligase (Dehalococcoides mccartyi (strain ATCC BAA-2266 / KCTC 15142 / 195) (Dehalococcoides ethenogenes (strain 195))).